The following is a 257-amino-acid chain: MRYALGVEYDGSEFQGWQQLGEHGGPSVQASLQAALSSVADAPVQVVCAGRTDAGVHGECQVVHFDSDARREPRGWMLGTTARLPPSIAVRWCVPAADDFHARFSARARRYRYRLLNRQIRPALYRQTLSWERRPLDADAMHAAAQALLGENDFSAFRSVQCQALHARRHLQAIHVQRIGEVVEVQVQANAFLHHMVRNIVGSLILVGTGEQPADWIATLLAGRDRTVAGPTAPPQGLVFIGPLYPAEWHLPAEVTQ.

Aspartate 53 serves as the catalytic Nucleophile. Tyrosine 111 serves as a coordination point for substrate.

It belongs to the tRNA pseudouridine synthase TruA family. In terms of assembly, homodimer.

It catalyses the reaction uridine(38/39/40) in tRNA = pseudouridine(38/39/40) in tRNA. In terms of biological role, formation of pseudouridine at positions 38, 39 and 40 in the anticodon stem and loop of transfer RNAs. The protein is tRNA pseudouridine synthase A of Xanthomonas euvesicatoria pv. vesicatoria (strain 85-10) (Xanthomonas campestris pv. vesicatoria).